The following is a 302-amino-acid chain: N-acetyl-D-glucosamine kinase (302 aa).

ATP-binding positions include 4 to 11 (GFDVGGTK) and 133 to 140 (GFGGGLVY). Positions 157, 177, 179, and 184 each coordinate Zn(2+).

The protein belongs to the ROK (NagC/XylR) family. NagK subfamily.

The catalysed reaction is N-acetyl-D-glucosamine + ATP = N-acetyl-D-glucosamine 6-phosphate + ADP + H(+). It participates in cell wall biogenesis; peptidoglycan recycling. Catalyzes the phosphorylation of N-acetyl-D-glucosamine (GlcNAc) derived from cell-wall degradation, yielding GlcNAc-6-P. This is N-acetyl-D-glucosamine kinase from Vibrio cholerae serotype O1 (strain ATCC 39315 / El Tor Inaba N16961).